The sequence spans 446 residues: Sensor protein PfeS (446 aa).

Residues 1–9 lie on the Cytoplasmic side of the membrane; sequence MRRHPLLWK. Residues 10-30 form a helical membrane-spanning segment; sequence LALLQVGFCLLLTWLIYTWGL. Topologically, residues 31-155 are periplasmic; sequence SVERSTYFLA…LLPGGLTPWT (125 aa). A helical membrane pass occupies residues 156–176; it reads HLVTHGIVPTLLAALLGLLLY. In terms of domain architecture, HAMP spans 177-233; sequence RHLVVPLNRLRDRADALRADELESTPLAAPLAARRDELGELAQALEHMAERLRLSLA. Residues 177–446 are Cytoplasmic-facing; that stretch reads RHLVVPLNRL…CLHLWLPAAA (270 aa). The Histidine kinase domain maps to 241-446; the sequence is TLSHELRTPL…CLHLWLPAAA (206 aa). Residue histidine 244 is modified to Phosphohistidine; by autocatalysis.

The protein localises to the cell inner membrane. The enzyme catalyses ATP + protein L-histidine = ADP + protein N-phospho-L-histidine.. In terms of biological role, member of the two-component regulatory system PfeR/PfeS. May activate PfeR by phosphorylation. The sequence is that of Sensor protein PfeS (pfeS) from Pseudomonas aeruginosa (strain ATCC 15692 / DSM 22644 / CIP 104116 / JCM 14847 / LMG 12228 / 1C / PRS 101 / PAO1).